We begin with the raw amino-acid sequence, 102 residues long: N(4)-acetylcytidine amidohydrolase (102 aa).

Residues 6 to 92 enclose the ASCH domain; the sequence is TFFGRFEADI…VIKAIYPGLD (87 aa). Lysine 20 functions as the Proton acceptor in the catalytic mechanism. Catalysis depends on threonine 23, which acts as the Nucleophile. Glutamate 73 acts as the Proton donor in catalysis.

This sequence belongs to the N(4)-acetylcytidine amidohydrolase family.

The catalysed reaction is N(4)-acetylcytidine + H2O = cytidine + acetate + H(+). It carries out the reaction N(4)-acetyl-2'-deoxycytidine + H2O = 2'-deoxycytidine + acetate + H(+). The enzyme catalyses N(4)-acetylcytosine + H2O = cytosine + acetate + H(+). Catalyzes the hydrolysis of N(4)-acetylcytidine (ac4C). This is N(4)-acetylcytidine amidohydrolase from Yersinia pseudotuberculosis serotype O:1b (strain IP 31758).